Consider the following 504-residue polypeptide: Probable cytosol aminopeptidase (504 aa).

Residues K263 and D268 each contribute to the Mn(2+) site. K275 is a catalytic residue. Residues D286, D345, and E347 each coordinate Mn(2+). The active site involves R349.

The protein belongs to the peptidase M17 family. Mn(2+) serves as cofactor.

The protein resides in the cytoplasm. The enzyme catalyses Release of an N-terminal amino acid, Xaa-|-Yaa-, in which Xaa is preferably Leu, but may be other amino acids including Pro although not Arg or Lys, and Yaa may be Pro. Amino acid amides and methyl esters are also readily hydrolyzed, but rates on arylamides are exceedingly low.. It carries out the reaction Release of an N-terminal amino acid, preferentially leucine, but not glutamic or aspartic acids.. Presumably involved in the processing and regular turnover of intracellular proteins. Catalyzes the removal of unsubstituted N-terminal amino acids from various peptides. In Sulfurihydrogenibium sp. (strain YO3AOP1), this protein is Probable cytosol aminopeptidase.